Consider the following 142-residue polypeptide: Large ribosomal subunit protein uL13 (142 aa).

The protein belongs to the universal ribosomal protein uL13 family. In terms of assembly, part of the 50S ribosomal subunit.

Functionally, this protein is one of the early assembly proteins of the 50S ribosomal subunit, although it is not seen to bind rRNA by itself. It is important during the early stages of 50S assembly. This Yersinia enterocolitica serotype O:8 / biotype 1B (strain NCTC 13174 / 8081) protein is Large ribosomal subunit protein uL13.